Here is a 200-residue protein sequence, read N- to C-terminus: Putative 3-methyladenine DNA glycosylase (200 aa).

The protein belongs to the DNA glycosylase MPG family.

This chain is Putative 3-methyladenine DNA glycosylase, found in Bradyrhizobium diazoefficiens (strain JCM 10833 / BCRC 13528 / IAM 13628 / NBRC 14792 / USDA 110).